A 319-amino-acid polypeptide reads, in one-letter code: 1-aminocyclopropane-1-carboxylate oxidase (319 aa).

The Fe2OG dioxygenase domain maps to 152–253; sequence GPNFGSKVSN…RMSLASFYNP (102 aa). Fe cation-binding residues include H177, D179, and H234.

Belongs to the iron/ascorbate-dependent oxidoreductase family. The cofactor is Fe cation.

The catalysed reaction is 1-aminocyclopropane-1-carboxylate + L-ascorbate + O2 = ethene + L-dehydroascorbate + hydrogen cyanide + CO2 + 2 H2O. It participates in alkene biosynthesis; ethylene biosynthesis via S-adenosyl-L-methionine; ethylene from S-adenosyl-L-methionine: step 2/2. In Nicotiana tabacum (Common tobacco), this protein is 1-aminocyclopropane-1-carboxylate oxidase (ACO).